Consider the following 1859-residue polypeptide: Y' element ATP-dependent helicase protein 1 copy 6 (1859 aa).

The region spanning 861–1038 is the Helicase ATP-binding domain; that stretch reads EIYMADTPSV…LQRIGLTGLA (178 aa). 874 to 881 is an ATP binding site; the sequence is APPGYGKT. The 150-residue stretch at 1095–1244 folds into the Helicase C-terminal domain; sequence KLLLALFEIE…EFYGLESKKG (150 aa). Positions 1318-1461 are enriched in low complexity; sequence ANASTNATTN…ATTTESTNAS (144 aa). The disordered stretch occupies residues 1318 to 1485; that stretch reads ANASTNATTN…RFHPVTDINK (168 aa). Residues 1462-1485 show a composition bias toward basic and acidic residues; that stretch reads AKEDANKDGNAEDNRFHPVTDINK.

Belongs to the helicase family. Yeast subtelomeric Y' repeat subfamily.

Functionally, catalyzes DNA unwinding and is involved in telomerase-independent telomere maintenance. The sequence is that of Y' element ATP-dependent helicase protein 1 copy 6 (YRF1-6) from Saccharomyces cerevisiae (strain ATCC 204508 / S288c) (Baker's yeast).